The sequence spans 359 residues: Probable dual-specificity RNA methyltransferase RlmN (359 aa).

Glu91 functions as the Proton acceptor in the catalytic mechanism. The 239-residue stretch at 97–335 folds into the Radical SAM core domain; the sequence is QHYGHSVCVT…CVVRQEHGTD (239 aa). A disulfide bridge connects residues Cys104 and Cys340. [4Fe-4S] cluster-binding residues include Cys111, Cys115, and Cys118. S-adenosyl-L-methionine-binding positions include 163–164, Ser195, 218–220, and Asn296; these read GE and SLH. The active-site S-methylcysteine intermediate is the Cys340.

The protein belongs to the radical SAM superfamily. RlmN family. The cofactor is [4Fe-4S] cluster.

The protein resides in the cytoplasm. It catalyses the reaction adenosine(2503) in 23S rRNA + 2 reduced [2Fe-2S]-[ferredoxin] + 2 S-adenosyl-L-methionine = 2-methyladenosine(2503) in 23S rRNA + 5'-deoxyadenosine + L-methionine + 2 oxidized [2Fe-2S]-[ferredoxin] + S-adenosyl-L-homocysteine. It carries out the reaction adenosine(37) in tRNA + 2 reduced [2Fe-2S]-[ferredoxin] + 2 S-adenosyl-L-methionine = 2-methyladenosine(37) in tRNA + 5'-deoxyadenosine + L-methionine + 2 oxidized [2Fe-2S]-[ferredoxin] + S-adenosyl-L-homocysteine. Specifically methylates position 2 of adenine 2503 in 23S rRNA and position 2 of adenine 37 in tRNAs. This is Probable dual-specificity RNA methyltransferase RlmN from Streptococcus pyogenes serotype M12 (strain MGAS2096).